The chain runs to 342 residues: Uroporphyrinogen decarboxylase (342 aa).

Residues 24-28 (RQAGR), Asp74, Tyr151, Ser206, and His322 each bind substrate.

This sequence belongs to the uroporphyrinogen decarboxylase family. Homodimer.

The protein resides in the cytoplasm. The enzyme catalyses uroporphyrinogen III + 4 H(+) = coproporphyrinogen III + 4 CO2. It participates in porphyrin-containing compound metabolism; protoporphyrin-IX biosynthesis; coproporphyrinogen-III from 5-aminolevulinate: step 4/4. Its function is as follows. Catalyzes the decarboxylation of four acetate groups of uroporphyrinogen-III to yield coproporphyrinogen-III. This chain is Uroporphyrinogen decarboxylase, found in Paracoccus denitrificans (strain Pd 1222).